We begin with the raw amino-acid sequence, 979 residues long: Translation initiation factor IF-2 (979 aa).

Positions 68–392 (VKQKQGTPAS…SRAAQDAMEL (325 aa)) are disordered. Basic and acidic residues-rich tracts occupy residues 102 to 179 (QDMR…KPEE), 217 to 229 (EMEK…EVFR), and 260 to 273 (TKED…DADG). Residues 309-326 (PSGNKNNNRPAQQQSNAS) show a composition bias toward polar residues. Residues 347–356 (DVQRQVKETL) show a composition bias toward basic and acidic residues. Residues 478-646 (ARPPIVTVMG…KVLLEADILE (169 aa)) enclose the tr-type G domain. The segment at 487-494 (GHVDHGKT) is G1. 487–494 (GHVDHGKT) provides a ligand contact to GTP. The segment at 512–516 (GITQH) is G2. The interval 534-537 (DTPG) is G3. Residues 534–538 (DTPGH) and 588–591 (NKID) each bind GTP. Residues 588–591 (NKID) are G4. Residues 624-626 (SAK) form a G5 region.

The protein belongs to the TRAFAC class translation factor GTPase superfamily. Classic translation factor GTPase family. IF-2 subfamily.

It localises to the cytoplasm. Functionally, one of the essential components for the initiation of protein synthesis. Protects formylmethionyl-tRNA from spontaneous hydrolysis and promotes its binding to the 30S ribosomal subunits. Also involved in the hydrolysis of GTP during the formation of the 70S ribosomal complex. The polypeptide is Translation initiation factor IF-2 (Porphyromonas gingivalis (strain ATCC 33277 / DSM 20709 / CIP 103683 / JCM 12257 / NCTC 11834 / 2561)).